The sequence spans 652 residues: Acetyl-coenzyme A synthetase (652 aa).

CoA contacts are provided by residues 191-194 (RAGR), Thr311, and Asn335. Residues 387–389 (GEP), 411–416 (DTWWQT), Asp500, and Arg515 each bind ATP. Ser523 is a binding site for CoA. Arg526 is a binding site for ATP. Mg(2+) contacts are provided by Val537, His539, and Ile542. Arg584 lines the CoA pocket. At Lys609 the chain carries N6-acetyllysine.

This sequence belongs to the ATP-dependent AMP-binding enzyme family. It depends on Mg(2+) as a cofactor. Post-translationally, acetylated. Deacetylation by the SIR2-homolog deacetylase activates the enzyme.

It carries out the reaction acetate + ATP + CoA = acetyl-CoA + AMP + diphosphate. Its function is as follows. Catalyzes the conversion of acetate into acetyl-CoA (AcCoA), an essential intermediate at the junction of anabolic and catabolic pathways. Acs undergoes a two-step reaction. In the first half reaction, Acs combines acetate with ATP to form acetyl-adenylate (AcAMP) intermediate. In the second half reaction, it can then transfer the acetyl group from AcAMP to the sulfhydryl group of CoA, forming the product AcCoA. Enables the cell to use acetate during aerobic growth to generate energy via the TCA cycle, and biosynthetic compounds via the glyoxylate shunt. Acetylates CheY, the response regulator involved in flagellar movement and chemotaxis. In Serratia proteamaculans (strain 568), this protein is Acetyl-coenzyme A synthetase.